Here is a 337-residue protein sequence, read N- to C-terminus: tRNA N6-adenosine threonylcarbamoyltransferase (337 aa).

Fe cation contacts are provided by H111 and H115. Residues 134-138 (LVSGG), D167, G180, and N272 each bind substrate. D300 is a binding site for Fe cation.

It belongs to the KAE1 / TsaD family. The cofactor is Fe(2+).

The protein localises to the cytoplasm. It catalyses the reaction L-threonylcarbamoyladenylate + adenosine(37) in tRNA = N(6)-L-threonylcarbamoyladenosine(37) in tRNA + AMP + H(+). Its function is as follows. Required for the formation of a threonylcarbamoyl group on adenosine at position 37 (t(6)A37) in tRNAs that read codons beginning with adenine. Is involved in the transfer of the threonylcarbamoyl moiety of threonylcarbamoyl-AMP (TC-AMP) to the N6 group of A37, together with TsaE and TsaB. TsaD likely plays a direct catalytic role in this reaction. In Citrobacter koseri (strain ATCC BAA-895 / CDC 4225-83 / SGSC4696), this protein is tRNA N6-adenosine threonylcarbamoyltransferase.